We begin with the raw amino-acid sequence, 633 residues long: Extracellular metalloproteinase 3 (633 aa).

An N-terminal signal peptide occupies residues 1–18 (MHGLLLAGLLALPMNVLA). A propeptide spanning residues 19–246 (HPAEQHASNV…VHNVVDYVAS (228 aa)) is cleaved from the precursor. Asn-410 is a glycosylation site (N-linked (GlcNAc...) asparagine). Residue His-429 participates in Zn(2+) binding. The active site involves Glu-430. His-433 provides a ligand contact to Zn(2+). N-linked (GlcNAc...) asparagine glycans are attached at residues Asn-480 and Asn-622.

This sequence belongs to the peptidase M36 family. It depends on Zn(2+) as a cofactor.

The protein localises to the secreted. Functionally, secreted metalloproteinase probably acting as a virulence factor. This chain is Extracellular metalloproteinase 3 (MEP3), found in Trichophyton equinum (Horse ringworm fungus).